We begin with the raw amino-acid sequence, 692 residues long: DNA-binding protein RFX2 (692 aa).

Residues 1-26 are disordered; it reads MQNSEGGADSPATVALRPAAQPVPAS. S26 is modified (phosphoserine). The segment at residues 169–244 is a DNA-binding region (RFX-type winged-helix); sequence TLQWLLDNYE…YHYYGIRLKP (76 aa). The disordered stretch occupies residues 261 to 296; sequence RQQPTHQKPRYRPAQKSDSLGDGSAHSNMHSTPEQA. Residues 285-294 show a composition bias toward polar residues; sequence AHSNMHSTPE. S386 bears the Phosphoserine mark. Basic and acidic residues predominate over residues 660–685; that stretch reads DGHSSEADVDGRSLGEPLVKRERSDP. Positions 660 to 692 are disordered; that stretch reads DGHSSEADVDGRSLGEPLVKRERSDPSHPLQGI.

It belongs to the RFX family. In terms of assembly, homodimer; probably only forms homodimers in testis. Heterodimer; heterodimerizes with RFX1 and RFX3. Expressed at highest level in testis. Expressed at lower level in thymus. Also expressed in stomach, kidney, liver, brain and heart. Weakly expressed in spleen and lung. Within testis, most abundantly present in spermatocytes: present from pachytene spermatocytes to early spermatids (at protein level). Also present in non-germinal tissues.

The protein resides in the nucleus. It localises to the cytoplasm. Transcription factor that acts as a key regulator of spermatogenesis. Acts by regulating expression of genes required for the haploid phase during spermiogenesis, such as genes required for cilium assembly and function. Recognizes and binds the X-box, a regulatory motif with DNA sequence 5'-GTNRCC(0-3N)RGYAAC-3' present on promoters. Probably activates transcription of the testis-specific histone gene H1-6. The chain is DNA-binding protein RFX2 (Rfx2) from Rattus norvegicus (Rat).